The primary structure comprises 430 residues: Cytochrome P450 monooxygenase FGSG_15680 (430 aa).

Cys-351 contacts heme.

This sequence belongs to the cytochrome P450 family. Requires heme as cofactor.

The protein operates within mycotoxin biosynthesis. Functionally, cytochrome P450 monooxygenase; part of the gene cluster that mediates the biosynthesis of gramillins A and B, bicyclic lipopeptides that induce cell death in maize leaves but not in wheat leaves. The nonribosomal peptide synthetase GRA1 incorporates respectively a glutamic adic (Glu), a leucine (Leu), a serine (Ser), a hydroxyglutamine (HOGln), a 2-amino decanoic acid, and 2 cysteins (CysB and CysA). The biosynthesis of 2-amino decanoic acid incorporated in gramillins could be initiated by a fatty acid synthase composed of the alpha and beta subunits FGSG_00036 and FGSG_11656. The cytochrome P450 monooxygenase FGSG_15680 could hydroxylate the fatty acid chain. Subsequent oxidation to the ketone by the oxidoreductase FGSG_00048 and transamination by aminotransferase FGSG_00049 could form 2-amino-decanoic acid. On the other hand, FGSG_15680 could also be responsible for the HO-modified glutamine at the gamma-position. Whether hydroxylation occurs on the fully assembled product or on the Gln residue prior to assembly into the gramillins requires further proof. The thioredoxin FGSG_00043 could also be required for the disulfide-bond formation between CysA and CysB. The specific involvement of the remaining proteins from the cluster is more difficult to discern, but could have broader regulatory (FGSG_00040 and FGSG_11657) or enzymatic functions (FGSG_00044 and FGSG_00045). The final C-domain of GRA1 does not possess the expected sequence of a termination CT domain, often implicated in macrocyclization and release of a cyclopeptidein fungal NRPs; and the thioesterase FGSG_00047 may act in concert with the terminal C-domain of GRA1 to catalyze the formation of the macrocyclic anhydride and release of the products. The protein is Cytochrome P450 monooxygenase FGSG_15680 of Gibberella zeae (strain ATCC MYA-4620 / CBS 123657 / FGSC 9075 / NRRL 31084 / PH-1) (Wheat head blight fungus).